We begin with the raw amino-acid sequence, 448 residues long: Doublesex- and mab-3-related transcription factor A2 (448 aa).

The DM DNA-binding region spans cysteine 57–arginine 104. Positions serine 166 to aspartate 187 are enriched in polar residues. Residues serine 166–methionine 259 are disordered. The span at glycine 229–glycine 239 shows a compositional bias: low complexity. One can recognise a DMA domain in the interval methionine 259–glutamine 294.

This sequence belongs to the DMRT family.

It is found in the nucleus. Functionally, may be involved in sexual development. In Monopterus albus (Swamp eel), this protein is Doublesex- and mab-3-related transcription factor A2 (dmrta2).